A 184-amino-acid chain; its full sequence is ATP-dependent protease subunit HslV (184 aa).

Thr-12 is a catalytic residue. Na(+) is bound by residues Ala-166, Cys-169, and Thr-172.

This sequence belongs to the peptidase T1B family. HslV subfamily. In terms of assembly, a double ring-shaped homohexamer of HslV is capped on each side by a ring-shaped HslU homohexamer. The assembly of the HslU/HslV complex is dependent on binding of ATP.

The protein resides in the cytoplasm. The catalysed reaction is ATP-dependent cleavage of peptide bonds with broad specificity.. Allosterically activated by HslU binding. Its function is as follows. Protease subunit of a proteasome-like degradation complex believed to be a general protein degrading machinery. The polypeptide is ATP-dependent protease subunit HslV (Brucella canis (strain ATCC 23365 / NCTC 10854 / RM-666)).